Here is a 138-residue protein sequence, read N- to C-terminus: Transcriptional activator protein Pur-alpha (138 aa).

A Phosphoserine modification is found at serine 70.

The protein belongs to the PUR DNA-binding protein family. Homodimer, heterodimer with PURB and heterotrimer with PURB and YBX1/Y-box protein 1. Interacts with FMR1; this interaction occurs in association with polyribosome.

The protein resides in the nucleus. This is a probable transcription activator that specifically binds the purine-rich single strand of the PUR element located upstream of the c-Myc gene. May play a role in the initiation of DNA replication and in recombination. This chain is Transcriptional activator protein Pur-alpha, found in Rattus norvegicus (Rat).